The primary structure comprises 391 residues: Thioredoxin-interacting protein (391 aa).

A Glycyl lysine isopeptide (Lys-Gly) (interchain with G-Cter in ubiquitin) cross-link involves residue K212. S361 is subject to Phosphoserine.

This sequence belongs to the arrestin family. Homodimer; disulfide-linked. Interacts with TXN/thioredoxin through its redox-active site. Interacts with transcriptional repressors ZBTB16, ZBTB32 and HDAC1. Interacts with DDIT4. Post-translationally, ubiquitinated; undergoes heterotypic 'Lys-48'-/'Lys-63'-branched polyubiquitination catalyzed by ITCH and UBR5 resulting in proteasomal degradation. Deubiquitinated by USP5, leading to TXNIP stabilization.

It localises to the cytoplasm. Its function is as follows. May act as an oxidative stress mediator by inhibiting thioredoxin activity or by limiting its bioavailability. Interacts with COPS5 and restores COPS5-induced suppression of CDKN1B stability, blocking the COPS5-mediated translocation of CDKN1B from the nucleus to the cytoplasm. Functions as a transcriptional repressor, possibly by acting as a bridge molecule between transcription factors and corepressor complexes, and over-expression will induce G0/G1 cell cycle arrest. Required for the maturation of natural killer cells. Acts as a suppressor of tumor cell growth. Inhibits the proteasomal degradation of DDIT4, and thereby contributes to the inhibition of the mammalian target of rapamycin complex 1 (mTORC1). This is Thioredoxin-interacting protein (TXNIP) from Pongo abelii (Sumatran orangutan).